We begin with the raw amino-acid sequence, 100 residues long: Small ribosomal subunit protein uS14c (100 aa).

This sequence belongs to the universal ribosomal protein uS14 family. Part of the 30S ribosomal subunit.

It localises to the plastid. Functionally, binds 16S rRNA, required for the assembly of 30S particles. The polypeptide is Small ribosomal subunit protein uS14c (Cuscuta obtusiflora (Peruvian dodder)).